The following is a 424-amino-acid chain: UDP-N-acetylglucosamine 1-carboxyvinyltransferase (424 aa).

22–23 (KN) lines the phosphoenolpyruvate pocket. Arg93 is a binding site for UDP-N-acetyl-alpha-D-glucosamine. The Proton donor role is filled by Cys117. A 2-(S-cysteinyl)pyruvic acid O-phosphothioketal modification is found at Cys117. Residues 122 to 126 (RPIDL), Asp307, and Val329 each bind UDP-N-acetyl-alpha-D-glucosamine.

It belongs to the EPSP synthase family. MurA subfamily.

The protein localises to the cytoplasm. It catalyses the reaction phosphoenolpyruvate + UDP-N-acetyl-alpha-D-glucosamine = UDP-N-acetyl-3-O-(1-carboxyvinyl)-alpha-D-glucosamine + phosphate. The protein operates within cell wall biogenesis; peptidoglycan biosynthesis. In terms of biological role, cell wall formation. Adds enolpyruvyl to UDP-N-acetylglucosamine. This chain is UDP-N-acetylglucosamine 1-carboxyvinyltransferase, found in Chlorobium limicola (strain DSM 245 / NBRC 103803 / 6330).